The chain runs to 175 residues: Transcriptional activatory protein BadR (175 aa).

The HTH marR-type domain occupies 20 to 156; sequence ANRLFFRLYQ…TLHYLLKILD (137 aa).

Its function is as follows. Transcriptional activator of genes for the anaerobic degradation of benzoate. The polypeptide is Transcriptional activatory protein BadR (badR) (Rhodopseudomonas palustris (strain ATCC BAA-98 / CGA009)).